The chain runs to 436 residues: Drebrin-like protein (436 aa).

One can recognise an ADF-H domain in the interval 2–133; the sequence is AVNLSRNGPA…EPECIMEKVA (132 aa). Thr-26 bears the Phosphothreonine mark. Ser-160 bears the Phosphoserine mark. Lys-176 carries the post-translational modification N6-acetyllysine. A coiled-coil region spans residues 179-233; the sequence is FWAKAEKEEENRRLEEKRRAEEERQRLEEERRERELQEAARREQRYQEQHRSAGA. 2 stretches are compositionally biased toward basic and acidic residues: residues 185 to 229 and 264 to 275; these read KEEE…EQHR and HPREIFKQKERA. The disordered stretch occupies residues 185 to 341; the sequence is KEEENRRLEE…AQTEEEPTYE (157 aa). A compositionally biased stretch (polar residues) spans 276 to 286; sequence MSTTSVTSSQP. 4 positions are modified to phosphoserine: Ser-277, Ser-280, Ser-283, and Ser-291. The segment covering 294-303 has biased composition (polar residues); that stretch reads LQKQLTQPET. Lys-296 carries the N6-acetyllysine modification. At Thr-299 the chain carries Phosphothreonine. Phosphotyrosine is present on residues Tyr-340 and Tyr-350. Positions 377 to 436 constitute an SH3 domain; sequence GQGLCARALYDYQAADDTEISFDPENLITGIEVIDEGWWRGYGPDGHFGMFPANYVELIE.

Belongs to the ABP1 family. As to quaternary structure, interacts with SHANK3, SYN1 and PRAM1. Interacts with SHANK2. Interacts with FGD1, DNM1 and MAP4K1. Interacts with ANKRD54. Interacts with COBL. Interacts with WASL and WIPF1. As to expression, detected in hippocampus neurons and in the Purkinje cell layer in cerebellum (at protein level). Predominantly expressed in brain, thymus and spleen. Also found in testis, heart and lung. Little or no expression detected in ovary or muscle.

The protein resides in the cytoplasm. It is found in the cytoskeleton. It localises to the cell projection. The protein localises to the lamellipodium. Its subcellular location is the ruffle. The protein resides in the cell cortex. It is found in the cytosol. It localises to the synapse. The protein localises to the perikaryon. Its subcellular location is the neuron projection. The protein resides in the cell membrane. It is found in the cytoplasmic vesicle. It localises to the clathrin-coated vesicle membrane. The protein localises to the golgi apparatus membrane. Its subcellular location is the podosome. The protein resides in the early endosome. It is found in the dendrite. It localises to the postsynaptic density. Adapter protein that binds F-actin and DNM1, and thereby plays a role in receptor-mediated endocytosis. Plays a role in the reorganization of the actin cytoskeleton, formation of cell projections, such as neurites, in neuron morphogenesis and synapse formation via its interaction with WASL and COBL. Does not bind G-actin and promote actin polymerization by itself. Required for the formation of organized podosome rosettes. May act as a common effector of antigen receptor-signaling pathways in leukocytes. Acts as a key component of the immunological synapse that regulates T-cell activation by bridging TCRs and the actin cytoskeleton to gene activation and endocytic processes. The polypeptide is Drebrin-like protein (Mus musculus (Mouse)).